The primary structure comprises 320 residues: ATP-dependent 6-phosphofructokinase (320 aa).

G12 is a binding site for ATP. 22–26 (RGVVR) serves as a coordination point for ADP. ATP-binding positions include 73–74 (RF) and 103–106 (GDGS). D104 contributes to the Mg(2+) binding site. 126–128 (TID) lines the substrate pocket. Catalysis depends on D128, which acts as the Proton acceptor. R155 serves as a coordination point for ADP. Substrate-binding positions include R163 and 170–172 (MGR). ADP-binding positions include 186–188 (GCE), K212, and 214–216 (KKH). Residues E223, R244, and 250-253 (HIQR) contribute to the substrate site.

Belongs to the phosphofructokinase type A (PFKA) family. ATP-dependent PFK group I subfamily. Prokaryotic clade 'B1' sub-subfamily. As to quaternary structure, homotetramer. Requires Mg(2+) as cofactor.

Its subcellular location is the cytoplasm. The catalysed reaction is beta-D-fructose 6-phosphate + ATP = beta-D-fructose 1,6-bisphosphate + ADP + H(+). Its pathway is carbohydrate degradation; glycolysis; D-glyceraldehyde 3-phosphate and glycerone phosphate from D-glucose: step 3/4. Its activity is regulated as follows. Allosterically activated by ADP and other diphosphonucleosides, and allosterically inhibited by phosphoenolpyruvate. Functionally, catalyzes the phosphorylation of D-fructose 6-phosphate to fructose 1,6-bisphosphate by ATP, the first committing step of glycolysis. In Edwardsiella ictaluri (strain 93-146), this protein is ATP-dependent 6-phosphofructokinase.